The following is a 184-amino-acid chain: Peptide deformylase 2 (184 aa).

Residues cysteine 110 and histidine 153 each contribute to the Fe cation site. Residue glutamate 154 is part of the active site. Histidine 157 serves as a coordination point for Fe cation.

Belongs to the polypeptide deformylase family. It depends on Fe(2+) as a cofactor.

The enzyme catalyses N-terminal N-formyl-L-methionyl-[peptide] + H2O = N-terminal L-methionyl-[peptide] + formate. Its function is as follows. Removes the formyl group from the N-terminal Met of newly synthesized proteins. Requires at least a dipeptide for an efficient rate of reaction. N-terminal L-methionine is a prerequisite for activity but the enzyme has broad specificity at other positions. This Bacillus cereus (strain ATCC 14579 / DSM 31 / CCUG 7414 / JCM 2152 / NBRC 15305 / NCIMB 9373 / NCTC 2599 / NRRL B-3711) protein is Peptide deformylase 2.